The following is a 312-amino-acid chain: Protein ABIL2 (312 aa).

Residues 173-287 (TIRETPPPPV…TEQQQPSKSK (115 aa)) are disordered. The segment covering 183 to 199 (RKSTSQSSSPRQPPQRS) has biased composition (low complexity). Polar residues predominate over residues 230–251 (SVATRKSASISRPTTPSKSRSI). A compositionally biased stretch (basic and acidic residues) spans 269 to 279 (AFEKDNQKETE).

The protein belongs to the ABI family. As to quaternary structure, binds SCAR.

The protein resides in the cytoplasm. It is found in the cytoskeleton. Involved in regulation of actin and microtubule organization. Part of a WAVE complex that activates the Arp2/3 complex. The chain is Protein ABIL2 (ABIL2) from Arabidopsis thaliana (Mouse-ear cress).